The sequence spans 278 residues: D-aminoacyl-tRNA deacylase (278 aa).

The protein belongs to the DtdA deacylase family. In terms of assembly, monomer. Requires Zn(2+) as cofactor.

It catalyses the reaction a D-aminoacyl-tRNA + H2O = a tRNA + a D-alpha-amino acid + H(+). The catalysed reaction is glycyl-tRNA(Ala) + H2O = tRNA(Ala) + glycine + H(+). Its function is as follows. D-aminoacyl-tRNA deacylase with broad substrate specificity. By recycling D-aminoacyl-tRNA to D-amino acids and free tRNA molecules, this enzyme counteracts the toxicity associated with the formation of D-aminoacyl-tRNA entities in vivo. The chain is D-aminoacyl-tRNA deacylase from Archaeoglobus fulgidus (strain ATCC 49558 / DSM 4304 / JCM 9628 / NBRC 100126 / VC-16).